Reading from the N-terminus, the 476-residue chain is Elongation factor Tu, chloroplastic (476 aa).

The N-terminal 67 residues, 1–67 (MAISAPAACS…QSTRRSFTVR (67 aa)), are a transit peptide targeting the chloroplast. A tr-type G domain is found at 77-281 (KPHVNIGTIG…AVDDYIPIPQ (205 aa)). Residues 86–93 (GHVDHGKT) are G1. 86 to 93 (GHVDHGKT) contributes to the GTP binding site. Position 94 is a phosphothreonine (Thr94). The G2 stretch occupies residues 127–131 (GITIN). Residues 148 to 151 (DCPG) are G3. Residues 148–152 (DCPGH) and 203–206 (NKED) each bind GTP. The segment at 203–206 (NKED) is G4. The G5 stretch occupies residues 241–243 (SAL).

It belongs to the TRAFAC class translation factor GTPase superfamily. Classic translation factor GTPase family. EF-Tu/EF-1A subfamily. Interacts with PI5K2. Interacts with APD2.

Its subcellular location is the plastid. It is found in the chloroplast. In terms of biological role, this protein promotes the GTP-dependent binding of aminoacyl-tRNA to the A-site of ribosomes during protein biosynthesis. In Arabidopsis thaliana (Mouse-ear cress), this protein is Elongation factor Tu, chloroplastic (TUFA).